The primary structure comprises 248 residues: Ankyrin repeat domain-containing protein 45 (248 aa).

2 stretches are compositionally biased toward acidic residues: residues 1–10 (MEPEETLESE) and 22–33 (EYEESQEAEETG). Positions 1 to 42 (MEPEETLESESSEKSLFSSQQEYEESQEAEETGAENPLLQPT) are disordered. 2 ANK repeats span residues 75–104 (VGRN…NLNE) and 108–137 (RGYT…DIEA).

The protein resides in the cytoplasm. It localises to the midbody. The protein localises to the midbody ring. It is found in the cleavage furrow. Functionally, may play a role during cell division. This Mus musculus (Mouse) protein is Ankyrin repeat domain-containing protein 45 (Ankrd45).